We begin with the raw amino-acid sequence, 266 residues long: L-aspartate dehydrogenase (266 aa).

NAD(+) contacts are provided by A123 and N189. H219 is an active-site residue.

The protein belongs to the L-aspartate dehydrogenase family.

It catalyses the reaction L-aspartate + NADP(+) + H2O = oxaloacetate + NH4(+) + NADPH + H(+). It carries out the reaction L-aspartate + NAD(+) + H2O = oxaloacetate + NH4(+) + NADH + H(+). It participates in cofactor biosynthesis; NAD(+) biosynthesis; iminoaspartate from L-aspartate (dehydrogenase route): step 1/1. Specifically catalyzes the NAD or NADP-dependent dehydrogenation of L-aspartate to iminoaspartate. The protein is L-aspartate dehydrogenase of Cupriavidus necator (strain ATCC 17699 / DSM 428 / KCTC 22496 / NCIMB 10442 / H16 / Stanier 337) (Ralstonia eutropha).